Consider the following 178-residue polypeptide: MALISSAAVTTINRAPVQANLATPFTGLKSSAGFPVTKKNNDITSITSNGSRVNCMQVWPPVGKKKFETLSYLPPLTDEQLLKEVEYLLRKGWVPCVEFELEKGFVHRQYNSSPGYYDGRYWTMWRLPLFGTTDAAQVLKEVAECKAEYPEAFIRIIGFDNVRQVQCISFIASTPKVY.

The N-terminal 54 residues, 1-54 (MALISSAAVTTINRAPVQANLATPFTGLKSSAGFPVTKKNNDITSITSNGSRVN), are a transit peptide targeting the chloroplast.

It belongs to the RuBisCO small chain family. Heterohexadecamer of 8 large and 8 small subunits.

Its subcellular location is the plastid. It localises to the chloroplast. Its function is as follows. RuBisCO catalyzes two reactions: the carboxylation of D-ribulose 1,5-bisphosphate, the primary event in carbon dioxide fixation, as well as the oxidative fragmentation of the pentose substrate. Both reactions occur simultaneously and in competition at the same active site. Although the small subunit is not catalytic it is essential for maximal activity. This chain is Ribulose bisphosphate carboxylase small subunit, chloroplastic, found in Trifolium repens (Creeping white clover).